We begin with the raw amino-acid sequence, 189 residues long: Protein GrpE (189 aa).

Positions 1 to 37 (MSDSSKEKKKKFADMVSRQKGDDQQSDNHKQTDDLNE) are disordered. Basic and acidic residues predominate over residues 17–33 (SRQKGDDQQSDNHKQTD).

It belongs to the GrpE family. In terms of assembly, homodimer.

Its subcellular location is the cytoplasm. Its function is as follows. Participates actively in the response to hyperosmotic and heat shock by preventing the aggregation of stress-denatured proteins, in association with DnaK and GrpE. It is the nucleotide exchange factor for DnaK and may function as a thermosensor. Unfolded proteins bind initially to DnaJ; upon interaction with the DnaJ-bound protein, DnaK hydrolyzes its bound ATP, resulting in the formation of a stable complex. GrpE releases ADP from DnaK; ATP binding to DnaK triggers the release of the substrate protein, thus completing the reaction cycle. Several rounds of ATP-dependent interactions between DnaJ, DnaK and GrpE are required for fully efficient folding. This Wolbachia sp. subsp. Drosophila simulans (strain wRi) protein is Protein GrpE.